The following is a 362-amino-acid chain: 4-hydroxy-3-methylbut-2-en-1-yl diphosphate synthase (flavodoxin) (362 aa).

The [4Fe-4S] cluster site is built by cysteine 266, cysteine 269, cysteine 301, and glutamate 308.

It belongs to the IspG family. [4Fe-4S] cluster serves as cofactor.

The catalysed reaction is (2E)-4-hydroxy-3-methylbut-2-enyl diphosphate + oxidized [flavodoxin] + H2O + 2 H(+) = 2-C-methyl-D-erythritol 2,4-cyclic diphosphate + reduced [flavodoxin]. It participates in isoprenoid biosynthesis; isopentenyl diphosphate biosynthesis via DXP pathway; isopentenyl diphosphate from 1-deoxy-D-xylulose 5-phosphate: step 5/6. In terms of biological role, converts 2C-methyl-D-erythritol 2,4-cyclodiphosphate (ME-2,4cPP) into 1-hydroxy-2-methyl-2-(E)-butenyl 4-diphosphate. The chain is 4-hydroxy-3-methylbut-2-en-1-yl diphosphate synthase (flavodoxin) from Malacoplasma penetrans (strain HF-2) (Mycoplasma penetrans).